The chain runs to 297 residues: MKHFLEISQLSSEQIESLLQRALYFKHTKQYPSYSQSIIANLFYENSTRTRISFELAERHLSMSVVNLDLQTSSETKGEAIEDTIRTLAAMGIQYFVIRHKQDGLQQNLANKLGDTVHIINAGDGTHAHPSQAILDMVTIVEQKKQLDKLKIAILGNIKHSRVANSFQCICSKLGVGELVLISPEIWQPSQVHFGRVTDNLNEGLEGADVIICLRVQRERLLQDDHLDLDFYRNNFALTQKSLSYAKPDAMVMHPGPMNRGVEIDSEVADGKQSCILQQVTNGVYARMAILESLIGS.

Carbamoyl phosphate-binding residues include Arg49 and Thr50. Lys77 serves as a coordination point for L-aspartate. 3 residues coordinate carbamoyl phosphate: Arg99, His129, and Gln132. L-aspartate-binding residues include Arg162 and Arg215. Carbamoyl phosphate is bound by residues Gly256 and Pro257.

Belongs to the aspartate/ornithine carbamoyltransferase superfamily. ATCase family. As to quaternary structure, heterododecamer (2C3:3R2) of six catalytic PyrB chains organized as two trimers (C3), and six regulatory PyrI chains organized as three dimers (R2).

The enzyme catalyses carbamoyl phosphate + L-aspartate = N-carbamoyl-L-aspartate + phosphate + H(+). It functions in the pathway pyrimidine metabolism; UMP biosynthesis via de novo pathway; (S)-dihydroorotate from bicarbonate: step 2/3. Its function is as follows. Catalyzes the condensation of carbamoyl phosphate and aspartate to form carbamoyl aspartate and inorganic phosphate, the committed step in the de novo pyrimidine nucleotide biosynthesis pathway. The protein is Aspartate carbamoyltransferase catalytic subunit of Legionella pneumophila (strain Corby).